The chain runs to 185 residues: MDIDPYKEFGATVELLSFLPSDFFPSVRDLLDTASALYREALESPEHCSPHHTALRETILCWGELMTLATWVGNNLEDPASRDLVVNYVNTNMGLKIRQLLWFHISCLTFGRETVLEYLVSFGVWIRTPPAYRPPNAPILSTLPETTVVRRRDRGRSPRRRTPSPRRRRSQSPRRRRSQSRESQC.

The disordered stretch occupies residues 136-185 (NAPILSTLPETTVVRRRDRGRSPRRRTPSPRRRRSQSPRRRRSQSRESQC). The span at 149-178 (VRRRDRGRSPRRRTPSPRRRRSQSPRRRRS) shows a compositional bias: basic residues. S157, S164, and S172 each carry phosphoserine; by host. The 1; half-length repeat unit spans residues 157-163 (SPRRRTP). The interval 157-179 (SPRRRTPSPRRRRSQSPRRRRSQ) is 3 X 8 AA repeats of S-P-R-R-R-[PR]-S-Q. Positions 160–177 (RRTPSPRRRRSQSPRRRR) match the Bipartite nuclear localization signal motif. Tandem repeats lie at residues 164 to 171 (SPRRRRSQ) and 172 to 179 (SPRRRRSQ). The interval 179–185 (QSRESQC) is RNA binding.

This sequence belongs to the orthohepadnavirus core antigen family. As to quaternary structure, homodimerizes, then multimerizes. Interacts with cytosol exposed regions of viral L glycoprotein present in the reticulum-to-Golgi compartment. Interacts with human FLNB. Phosphorylated form interacts with host importin alpha; this interaction depends on the exposure of the NLS, which itself depends upon genome maturation and/or phosphorylation of the capsid protein. Interacts with host NUP153. In terms of processing, phosphorylated by host SRPK1, SRPK2, and maybe protein kinase C or GAPDH. Phosphorylation is critical for pregenomic RNA packaging. Protein kinase C phosphorylation is stimulated by HBx protein and may play a role in transport of the viral genome to the nucleus at the late step during the viral replication cycle.

It localises to the virion. The protein localises to the host cytoplasm. Its function is as follows. Self assembles to form an icosahedral capsid. Most capsids appear to be large particles with an icosahedral symmetry of T=4 and consist of 240 copies of capsid protein, though a fraction forms smaller T=3 particles consisting of 180 capsid proteins. Entering capsids are transported along microtubules to the nucleus. Phosphorylation of the capsid is thought to induce exposure of nuclear localization signal in the C-terminal portion of the capsid protein that allows binding to the nuclear pore complex via the importin (karyopherin-) alpha and beta. Capsids are imported in intact form through the nuclear pore into the nuclear basket, where it probably binds NUP153. Only capsids that contain the mature viral genome can release the viral DNA and capsid protein into the nucleoplasm. Immature capsids get stuck in the basket. Capsids encapsulate the pre-genomic RNA and the P protein. Pre-genomic RNA is reverse-transcribed into DNA while the capsid is still in the cytoplasm. The capsid can then either be directed to the nucleus, providing more genomes for transcription, or bud through the endoplasmic reticulum to provide new virions. This chain is Capsid protein, found in Homo sapiens (Human).